Consider the following 131-residue polypeptide: Small ribosomal subunit protein uS8 (131 aa).

This sequence belongs to the universal ribosomal protein uS8 family. As to quaternary structure, part of the 30S ribosomal subunit. Contacts proteins S5 and S12.

Its function is as follows. One of the primary rRNA binding proteins, it binds directly to 16S rRNA central domain where it helps coordinate assembly of the platform of the 30S subunit. In Wolbachia sp. subsp. Brugia malayi (strain TRS), this protein is Small ribosomal subunit protein uS8.